The chain runs to 139 residues: uncharacterized protein (139 aa).

A disordered region spans residues 54–75 (NSLHRHGDQAWGKHRRQNSLKS).

This is an uncharacterized protein from Homo sapiens (Human).